The following is a 470-amino-acid chain: 3-isopropylmalate dehydratase large subunit (470 aa).

Cys349, Cys409, and Cys412 together coordinate [4Fe-4S] cluster.

The protein belongs to the aconitase/IPM isomerase family. LeuC type 1 subfamily. As to quaternary structure, heterodimer of LeuC and LeuD. [4Fe-4S] cluster serves as cofactor.

The catalysed reaction is (2R,3S)-3-isopropylmalate = (2S)-2-isopropylmalate. It participates in amino-acid biosynthesis; L-leucine biosynthesis; L-leucine from 3-methyl-2-oxobutanoate: step 2/4. In terms of biological role, catalyzes the isomerization between 2-isopropylmalate and 3-isopropylmalate, via the formation of 2-isopropylmaleate. The chain is 3-isopropylmalate dehydratase large subunit from Campylobacter jejuni subsp. jejuni serotype O:2 (strain ATCC 700819 / NCTC 11168).